The following is a 456-amino-acid chain: tRNA-2-methylthio-N(6)-dimethylallyladenosine synthase (456 aa).

Residues 1–116 (MTYFFETYGC…FESIFQEIEQ (116 aa)) enclose the MTTase N-terminal domain. 6 residues coordinate [4Fe-4S] cluster: Cys-10, Cys-46, Cys-79, Cys-162, Cys-166, and Cys-169. One can recognise a Radical SAM core domain in the interval 148 to 384 (SEGSFQSFIP…IALQMSTTLK (237 aa)). In terms of domain architecture, TRAM spans 387–452 (RARVGKTLPV…GRTLRAHLVQ (66 aa)).

This sequence belongs to the methylthiotransferase family. MiaB subfamily. As to quaternary structure, monomer. [4Fe-4S] cluster is required as a cofactor.

The protein resides in the cytoplasm. The enzyme catalyses N(6)-dimethylallyladenosine(37) in tRNA + (sulfur carrier)-SH + AH2 + 2 S-adenosyl-L-methionine = 2-methylsulfanyl-N(6)-dimethylallyladenosine(37) in tRNA + (sulfur carrier)-H + 5'-deoxyadenosine + L-methionine + A + S-adenosyl-L-homocysteine + 2 H(+). Its function is as follows. Catalyzes the methylthiolation of N6-(dimethylallyl)adenosine (i(6)A), leading to the formation of 2-methylthio-N6-(dimethylallyl)adenosine (ms(2)i(6)A) at position 37 in tRNAs that read codons beginning with uridine. This chain is tRNA-2-methylthio-N(6)-dimethylallyladenosine synthase, found in Treponema pallidum (strain Nichols).